Here is a 663-residue protein sequence, read N- to C-terminus: DNA ligase (663 aa).

Residues 31–35 (DFEYD), 80–81 (SL), and glutamate 110 each bind NAD(+). The N6-AMP-lysine intermediate role is filled by lysine 112. The NAD(+) site is built by arginine 133, glutamate 168, lysine 284, and lysine 308. Positions 402, 405, 420, and 425 each coordinate Zn(2+). One can recognise a BRCT domain in the interval 586 to 663 (IKDNRFEGKT…DEDKFRKMIE (78 aa)).

The protein belongs to the NAD-dependent DNA ligase family. LigA subfamily. Mg(2+) serves as cofactor. It depends on Mn(2+) as a cofactor.

The catalysed reaction is NAD(+) + (deoxyribonucleotide)n-3'-hydroxyl + 5'-phospho-(deoxyribonucleotide)m = (deoxyribonucleotide)n+m + AMP + beta-nicotinamide D-nucleotide.. DNA ligase that catalyzes the formation of phosphodiester linkages between 5'-phosphoryl and 3'-hydroxyl groups in double-stranded DNA using NAD as a coenzyme and as the energy source for the reaction. It is essential for DNA replication and repair of damaged DNA. The chain is DNA ligase from Acetivibrio thermocellus (strain ATCC 27405 / DSM 1237 / JCM 9322 / NBRC 103400 / NCIMB 10682 / NRRL B-4536 / VPI 7372) (Clostridium thermocellum).